The following is a 313-amino-acid chain: Ribosomal RNA small subunit methyltransferase H (313 aa).

S-adenosyl-L-methionine contacts are provided by residues 35 to 37 (GGH), Asp-55, Phe-81, Asp-103, and Gln-110.

It belongs to the methyltransferase superfamily. RsmH family.

It localises to the cytoplasm. It carries out the reaction cytidine(1402) in 16S rRNA + S-adenosyl-L-methionine = N(4)-methylcytidine(1402) in 16S rRNA + S-adenosyl-L-homocysteine + H(+). In terms of biological role, specifically methylates the N4 position of cytidine in position 1402 (C1402) of 16S rRNA. In Pseudomonas aeruginosa (strain LESB58), this protein is Ribosomal RNA small subunit methyltransferase H.